We begin with the raw amino-acid sequence, 432 residues long: MSALRNQDPEIHDVIQKEVQRQNDGLELIASENFASRAVMEAMGTALTNKYAEGLPGKRYYGGCEVVDRAEELARERAKELYDCDWVNVQPHAGAQANSAVYLTLLDPGDTFLGLDLSHGGHLTHGSPVNFSGILYEAEYYGVEEETGRIDMNRVRDRAKEVQPKMISIGASAYPRDFDYEAFREIADEVGAFLWMDMAHTAGLIAGGVLNDPMPHTHVVTTTTHKTLRGPRGGMILLGDDYENPMGKTARKSGRTKMMSELLDSAVFPGTQGGPLMHVIAAKAVGFKEALKPSFAEYTQQVVDNAQAMGAELRERGYDLVSDGTDNHLVLIDLRNKGLTGKEAEQALEAAGITANKNMVPFDDKSPFVTSGLRLGTPAMTTRGFGPDEFAHVAEMIDRVLQDPEDEDTQAAVEREVKALCDQHPLYDVAMA.

(6S)-5,6,7,8-tetrahydrofolate is bound by residues Leu117 and Gly121–Leu123. The residue at position 226 (Lys226) is an N6-(pyridoxal phosphate)lysine. Ser366–Phe368 provides a ligand contact to (6S)-5,6,7,8-tetrahydrofolate.

The protein belongs to the SHMT family. As to quaternary structure, homodimer. Pyridoxal 5'-phosphate serves as cofactor.

Its subcellular location is the cytoplasm. The catalysed reaction is (6R)-5,10-methylene-5,6,7,8-tetrahydrofolate + glycine + H2O = (6S)-5,6,7,8-tetrahydrofolate + L-serine. It participates in one-carbon metabolism; tetrahydrofolate interconversion. It functions in the pathway amino-acid biosynthesis; glycine biosynthesis; glycine from L-serine: step 1/1. Functionally, catalyzes the reversible interconversion of serine and glycine with tetrahydrofolate (THF) serving as the one-carbon carrier. This reaction serves as the major source of one-carbon groups required for the biosynthesis of purines, thymidylate, methionine, and other important biomolecules. Also exhibits THF-independent aldolase activity toward beta-hydroxyamino acids, producing glycine and aldehydes, via a retro-aldol mechanism. The chain is Serine hydroxymethyltransferase from Salinibacter ruber (strain DSM 13855 / M31).